Reading from the N-terminus, the 98-residue chain is uncharacterized protein (98 aa).

This is an uncharacterized protein from Dictyostelium discoideum (Social amoeba).